The following is a 68-amino-acid chain: uncharacterized protein (68 aa).

This is an uncharacterized protein from Saccharomyces cerevisiae (strain ATCC 204508 / S288c) (Baker's yeast).